The following is a 142-amino-acid chain: Universal stress protein C (142 aa).

The protein belongs to the universal stress protein A family.

The protein resides in the cytoplasm. Required for resistance to DNA-damaging agents. The protein is Universal stress protein C (uspC) of Escherichia coli (strain K12).